The following is a 351-amino-acid chain: Nicotinate-nucleotide--dimethylbenzimidazole phosphoribosyltransferase (351 aa).

Catalysis depends on glutamate 317, which acts as the Proton acceptor.

It belongs to the CobT family.

The enzyme catalyses 5,6-dimethylbenzimidazole + nicotinate beta-D-ribonucleotide = alpha-ribazole 5'-phosphate + nicotinate + H(+). It participates in nucleoside biosynthesis; alpha-ribazole biosynthesis; alpha-ribazole from 5,6-dimethylbenzimidazole: step 1/2. Its function is as follows. Catalyzes the synthesis of alpha-ribazole-5'-phosphate from nicotinate mononucleotide (NAMN) and 5,6-dimethylbenzimidazole (DMB). This chain is Nicotinate-nucleotide--dimethylbenzimidazole phosphoribosyltransferase, found in Pseudomonas aeruginosa (strain UCBPP-PA14).